The chain runs to 324 residues: Putative arsenical pump-driving ATPase (324 aa).

21 to 28 (GKGGVGKT) is a binding site for ATP.

This sequence belongs to the arsA ATPase family.

It carries out the reaction arsenite(in) + ATP + H2O = arsenite(out) + ADP + phosphate + H(+). Anion-transporting ATPase. Catalyzes the extrusion of arsenite. The chain is Putative arsenical pump-driving ATPase from Methanothermobacter thermautotrophicus (strain ATCC 29096 / DSM 1053 / JCM 10044 / NBRC 100330 / Delta H) (Methanobacterium thermoautotrophicum).